The following is a 136-amino-acid chain: Large ribosomal subunit protein bL19 (136 aa).

Positions 1–23 are disordered; the sequence is MEETVNNQETPETSEEETADEET. A compositionally biased stretch (acidic residues) spans 12 to 23; that stretch reads ETSEEETADEET.

Belongs to the bacterial ribosomal protein bL19 family.

Functionally, this protein is located at the 30S-50S ribosomal subunit interface and may play a role in the structure and function of the aminoacyl-tRNA binding site. The sequence is that of Large ribosomal subunit protein bL19 from Dehalococcoides mccartyi (strain ATCC BAA-2266 / KCTC 15142 / 195) (Dehalococcoides ethenogenes (strain 195)).